A 329-amino-acid chain; its full sequence is Phospho-N-acetylmuramoyl-pentapeptide-transferase (329 aa).

9 helical membrane-spanning segments follow: residues 1–21 (MLLNGIVAAVITMIITIIGIP), 53–73 (MGGFVFVVVSLVVSLVAALVF), 76–96 (FSPAFITAWWVFAMYAVIGFL), 109–129 (GLTAKQKMLAQILIGIVSYFI), 141–161 (ILSWQVNIGIFFSIFIIIWLV), 175–195 (GLASITVAISLTAYAVIAVVH), 198–218 (YDVLLIILSVIGGLLGFFVFN), 237–257 (FLAIVSILLHAEWTLLLIGAV), and 309–329 (IVFWLFTAVLSVIALCIYFAF).

It belongs to the glycosyltransferase 4 family. MraY subfamily. Requires Mg(2+) as cofactor.

It is found in the cell membrane. It carries out the reaction UDP-N-acetyl-alpha-D-muramoyl-L-alanyl-gamma-D-glutamyl-L-lysyl-D-alanyl-D-alanine + di-trans,octa-cis-undecaprenyl phosphate = Mur2Ac(oyl-L-Ala-gamma-D-Glu-L-Lys-D-Ala-D-Ala)-di-trans,octa-cis-undecaprenyl diphosphate + UMP. Its pathway is cell wall biogenesis; peptidoglycan biosynthesis. Functionally, catalyzes the initial step of the lipid cycle reactions in the biosynthesis of the cell wall peptidoglycan: transfers peptidoglycan precursor phospho-MurNAc-pentapeptide from UDP-MurNAc-pentapeptide onto the lipid carrier undecaprenyl phosphate, yielding undecaprenyl-pyrophosphoryl-MurNAc-pentapeptide, known as lipid I. The sequence is that of Phospho-N-acetylmuramoyl-pentapeptide-transferase from Lactococcus lactis subsp. cremoris (strain MG1363).